Consider the following 213-residue polypeptide: Ribonuclease T (213 aa).

Residues Val28–Phe202 enclose the Exonuclease domain. 4 residues coordinate Mg(2+): Asp31, Glu33, His189, and Asp194. His189 serves as the catalytic Proton donor/acceptor.

The protein belongs to the RNase T family. In terms of assembly, homodimer. Requires Mg(2+) as cofactor.

In terms of biological role, trims short 3' overhangs of a variety of RNA species, leaving a one or two nucleotide 3' overhang. Responsible for the end-turnover of tRNA: specifically removes the terminal AMP residue from uncharged tRNA (tRNA-C-C-A). Also appears to be involved in tRNA biosynthesis. The chain is Ribonuclease T from Xanthomonas axonopodis pv. citri (strain 306).